We begin with the raw amino-acid sequence, 512 residues long: Protein male-specific lethal-3 (512 aa).

In terms of domain architecture, Chromo spans 11–90 (FHKGEIVLCY…QLQRELAEAA (80 aa)). The disordered stretch occupies residues 98 to 175 (YSYKGTPDKP…DGRLKGNRGR (78 aa)). A compositionally biased stretch (basic and acidic residues) spans 149–169 (RTRDNSGGKRKEKPPSGDGRL). In terms of domain architecture, MRG spans 196-500 (QEDRIMMRVS…STALPQEDLQ (305 aa)).

Component of the male-specific lethal (MSL) histone acetyltransferase complex, composed of mof, mle, msl-1, msl-2 and msl-3 proteins, as well as roX1 and roX2 non-coding RNAs. Component of a maternal MSL subcomplex composed of mof, msl-1 and msl-3. Post-translationally, ubiquitinated by msl-2.

Its subcellular location is the nucleus. The protein resides in the chromosome. Functionally, component of the male-specific lethal (MSL) histone acetyltransferase complex, a multiprotein complex essential for elevating transcription of the single X chromosome in the male (X chromosome dosage compensation). The MSL complex specifically associates with the single X chromosome in males and mediates formation of H4K16ac, promoting a two-fold activation of X chromosome. Acts as a histone reader that specifically recognizes and binds histone H3 trimethylated at 'Lys-36' (H3K36me3) and histone H4 monomethylated at 'Lys-20' (H4K20me1). Within the MSL complex, mediates the spreading of the MSL complex from initiation sites on the male X chromosome to flanking chromatin. Following initial recruitment of the MSL complex to male X chromosome by msl-2, msl-3 binds H3K36me3 and promotes spreading of the MSL complex in cis. In addition to its role in dosage compensation in males, promotes germline stem cell differentiation in females: recognizes and binds H3K36me3, promoting recruitment of the ATAC complex and transcription of genes, such as RpS19b. This chain is Protein male-specific lethal-3, found in Drosophila melanogaster (Fruit fly).